Reading from the N-terminus, the 155-residue chain is Small ribosomal subunit protein bS6 (155 aa).

The segment at 94–155 (EKHEEGPSAM…RPRRPREDRV (62 aa)) is disordered.

It belongs to the bacterial ribosomal protein bS6 family.

Functionally, binds together with bS18 to 16S ribosomal RNA. The chain is Small ribosomal subunit protein bS6 from Rhizobium leguminosarum bv. trifolii (strain WSM2304).